The chain runs to 166 residues: Small ribosomal subunit protein uS5 (166 aa).

Positions 12-75 constitute an S5 DRBM domain; the sequence is YIEKLVQVNR…EAARRNMIQV (64 aa).

Belongs to the universal ribosomal protein uS5 family. As to quaternary structure, part of the 30S ribosomal subunit. Contacts proteins S4 and S8.

Functionally, with S4 and S12 plays an important role in translational accuracy. Its function is as follows. Located at the back of the 30S subunit body where it stabilizes the conformation of the head with respect to the body. The polypeptide is Small ribosomal subunit protein uS5 (Pseudomonas savastanoi pv. phaseolicola (strain 1448A / Race 6) (Pseudomonas syringae pv. phaseolicola (strain 1448A / Race 6))).